A 439-amino-acid polypeptide reads, in one-letter code: Tol-Pal system protein TolB (439 aa).

An N-terminal signal peptide occupies residues 1 to 22 (MKKPLRWLAALTVLLLPLSALA).

This sequence belongs to the TolB family. The Tol-Pal system is composed of five core proteins: the inner membrane proteins TolA, TolQ and TolR, the periplasmic protein TolB and the outer membrane protein Pal. They form a network linking the inner and outer membranes and the peptidoglycan layer.

It is found in the periplasm. In terms of biological role, part of the Tol-Pal system, which plays a role in outer membrane invagination during cell division and is important for maintaining outer membrane integrity. This chain is Tol-Pal system protein TolB, found in Xanthomonas oryzae pv. oryzae (strain MAFF 311018).